We begin with the raw amino-acid sequence, 460 residues long: Argininosuccinate lyase (460 aa).

The protein belongs to the lyase 1 family. Argininosuccinate lyase subfamily.

Its subcellular location is the cytoplasm. It catalyses the reaction 2-(N(omega)-L-arginino)succinate = fumarate + L-arginine. It participates in amino-acid biosynthesis; L-arginine biosynthesis; L-arginine from L-ornithine and carbamoyl phosphate: step 3/3. This chain is Argininosuccinate lyase, found in Streptococcus uberis (strain ATCC BAA-854 / 0140J).